The chain runs to 214 residues: Pyridoxine/pyridoxamine 5'-phosphate oxidase (214 aa).

Residues Arg10–Tyr13 and Lys68 each bind substrate. Residues Arg63 to Lys68, Tyr78 to Thr79, Lys85, and Gln107 each bind FMN. Residues Tyr125, Arg129, and Ser133 each contribute to the substrate site. FMN is bound by residues Gln142–Ser143 and Trp187. Arg193–His195 is a substrate binding site. Arg197 contacts FMN.

Belongs to the pyridoxamine 5'-phosphate oxidase family. As to quaternary structure, homodimer. FMN serves as cofactor.

It carries out the reaction pyridoxamine 5'-phosphate + O2 + H2O = pyridoxal 5'-phosphate + H2O2 + NH4(+). It catalyses the reaction pyridoxine 5'-phosphate + O2 = pyridoxal 5'-phosphate + H2O2. Its pathway is cofactor metabolism; pyridoxal 5'-phosphate salvage; pyridoxal 5'-phosphate from pyridoxamine 5'-phosphate: step 1/1. It functions in the pathway cofactor metabolism; pyridoxal 5'-phosphate salvage; pyridoxal 5'-phosphate from pyridoxine 5'-phosphate: step 1/1. Functionally, catalyzes the oxidation of either pyridoxine 5'-phosphate (PNP) or pyridoxamine 5'-phosphate (PMP) into pyridoxal 5'-phosphate (PLP). In Synechocystis sp. (strain ATCC 27184 / PCC 6803 / Kazusa), this protein is Pyridoxine/pyridoxamine 5'-phosphate oxidase.